The following is a 167-amino-acid chain: Protein archease (167 aa).

At Ala-2 the chain carries N-acetylalanine. Ca(2+) contacts are provided by Asp-39, Asp-166, and Ile-167.

The protein belongs to the archease family. As to quaternary structure, component of the tRNA-splicing ligase complex.

In terms of biological role, component of the tRNA-splicing ligase complex required to facilitate the enzymatic turnover of catalytic subunit RTCB. Together with DDX1, acts by facilitating the guanylylation of RTCB, a key intermediate step in tRNA ligation. The polypeptide is Protein archease (ZBTB8OS) (Bos taurus (Bovine)).